A 524-amino-acid polypeptide reads, in one-letter code: Glucose-6-phosphate isomerase (524 aa).

Glu346 serves as the catalytic Proton donor. Active-site residues include His377 and Lys492.

The protein belongs to the GPI family.

It localises to the cytoplasm. It carries out the reaction alpha-D-glucose 6-phosphate = beta-D-fructose 6-phosphate. The protein operates within carbohydrate biosynthesis; gluconeogenesis. It participates in carbohydrate degradation; glycolysis; D-glyceraldehyde 3-phosphate and glycerone phosphate from D-glucose: step 2/4. Functionally, catalyzes the reversible isomerization of glucose-6-phosphate to fructose-6-phosphate. In Chlamydia trachomatis serovar A (strain ATCC VR-571B / DSM 19440 / HAR-13), this protein is Glucose-6-phosphate isomerase.